A 147-amino-acid polypeptide reads, in one-letter code: D-aminoacyl-tRNA deacylase (147 aa).

Residues 136–137 (GP) carry the Gly-cisPro motif, important for rejection of L-amino acids motif.

This sequence belongs to the DTD family. In terms of assembly, homodimer.

The protein localises to the cytoplasm. It catalyses the reaction glycyl-tRNA(Ala) + H2O = tRNA(Ala) + glycine + H(+). It carries out the reaction a D-aminoacyl-tRNA + H2O = a tRNA + a D-alpha-amino acid + H(+). Its function is as follows. An aminoacyl-tRNA editing enzyme that deacylates mischarged D-aminoacyl-tRNAs. Also deacylates mischarged glycyl-tRNA(Ala), protecting cells against glycine mischarging by AlaRS. Acts via tRNA-based rather than protein-based catalysis; rejects L-amino acids rather than detecting D-amino acids in the active site. By recycling D-aminoacyl-tRNA to D-amino acids and free tRNA molecules, this enzyme counteracts the toxicity associated with the formation of D-aminoacyl-tRNA entities in vivo and helps enforce protein L-homochirality. This chain is D-aminoacyl-tRNA deacylase, found in Streptococcus uberis (strain ATCC BAA-854 / 0140J).